The following is a 963-amino-acid chain: Protein translocase subunit SecA (963 aa).

ATP-binding positions include Gln-87, Gly-105–Thr-109, and Asp-512. 2 disordered regions span residues Gly-868–Thr-909 and Gln-924–Ser-963. Positions Pro-874–Glu-886 are enriched in acidic residues. Zn(2+) is bound by residues Cys-949, Cys-951, Cys-960, and His-961.

This sequence belongs to the SecA family. In terms of assembly, monomer and homodimer. Part of the essential Sec protein translocation apparatus which comprises SecA, SecYEG and auxiliary proteins SecDF. Other proteins may also be involved. The cofactor is Zn(2+).

It is found in the cell inner membrane. Its subcellular location is the cytoplasm. The catalysed reaction is ATP + H2O + cellular proteinSide 1 = ADP + phosphate + cellular proteinSide 2.. In terms of biological role, part of the Sec protein translocase complex. Interacts with the SecYEG preprotein conducting channel. Has a central role in coupling the hydrolysis of ATP to the transfer of proteins into and across the cell membrane, serving as an ATP-driven molecular motor driving the stepwise translocation of polypeptide chains across the membrane. In Solibacter usitatus (strain Ellin6076), this protein is Protein translocase subunit SecA.